We begin with the raw amino-acid sequence, 498 residues long: Cytochrome P450 monooxygenase astB (498 aa).

A helical transmembrane segment spans residues 7-27 (FTTMPVVLLVGLVLYQLLAFT). N-linked (GlcNAc...) asparagine glycans are attached at residues N237, N248, and N346. A heme-binding site is contributed by C425.

The protein belongs to the cytochrome P450 family. Requires heme as cofactor.

Its subcellular location is the membrane. It carries out the reaction preasperterpenoid A + 4 reduced [NADPH--hemoprotein reductase] + 4 O2 = asperterpenoid A + 4 oxidized [NADPH--hemoprotein reductase] + 5 H2O + 5 H(+). The catalysed reaction is asperterpenoid A + 2 reduced [NADPH--hemoprotein reductase] + 2 O2 = asperterpenoid B + 2 oxidized [NADPH--hemoprotein reductase] + 3 H2O + 3 H(+). It functions in the pathway secondary metabolite biosynthesis; terpenoid biosynthesis. Cytochrome P450 monooxygenase; part of the gene cluster that mediates the biosynthesis of the asperterpenoids, sesterterpenes that exhibit anti-tuberculosis activity. The first step of the pathway is performed by the sesterterpene synthase astC that possesses both prenyl transferase and terpene cyclase activity, converting isopentenyl diphosphate and dimethylallyl diphosphate into geranylfarnesyl diphosphate (GFPP) and further converting GFPP into preasperterpenoid A, respectively. The cytochrome P450 monooxygenase astB then dually oxidizes preasperterpenoid A to produce asperterpenoid A along with a minor product, asperterpenoid B. Finally, the cytochrome P450 monooxygenase astA converts asperterpenoid A into asperterpenoid C. This is Cytochrome P450 monooxygenase astB from Talaromyces wortmannii (Penicillium wortmannii).